Reading from the N-terminus, the 322-residue chain is Mitochondrial thiamine pyrophosphate carrier 1 (322 aa).

Solcar repeat units lie at residues 12–111 (GSKT…VTLG), 122–208 (PAAA…LRLP), and 215–310 (PFGS…VLGI). 6 consecutive transmembrane segments (helical) span residues 18 to 38 (MIAGATAGLIARFVIAPLDVV), 92 to 108 (LMYVSYSAIQFTTYRSV), 128 to 148 (FIAGASAGAVATTATYPLDLL), 180 to 200 (FFQGLGAGVGQIVPYMGIFFA), 221 to 241 (ASAGVIASVIAKTGIFPFDLI), and 285 to 302 (GLTVSLFKSAPASAVTMW).

This sequence belongs to the mitochondrial carrier (TC 2.A.29) family.

Its subcellular location is the mitochondrion inner membrane. Its function is as follows. Mitochondrial transporter that mediates uptake of thiamine pyrophosphate (ThPP) into mitochondria. This is Mitochondrial thiamine pyrophosphate carrier 1 (tpc1) from Botryotinia fuckeliana (strain B05.10) (Noble rot fungus).